We begin with the raw amino-acid sequence, 124 residues long: Aspartate 1-decarboxylase (124 aa).

The active-site Schiff-base intermediate with substrate; via pyruvic acid is serine 25. A Pyruvic acid (Ser) modification is found at serine 25. Residue threonine 57 coordinates substrate. Residue tyrosine 58 is the Proton donor of the active site. Residue 71-73 (GAA) participates in substrate binding.

This sequence belongs to the PanD family. Heterooctamer of four alpha and four beta subunits. It depends on pyruvate as a cofactor. In terms of processing, is synthesized initially as an inactive proenzyme, which is activated by self-cleavage at a specific serine bond to produce a beta-subunit with a hydroxyl group at its C-terminus and an alpha-subunit with a pyruvoyl group at its N-terminus.

The protein localises to the cytoplasm. The catalysed reaction is L-aspartate + H(+) = beta-alanine + CO2. Its pathway is cofactor biosynthesis; (R)-pantothenate biosynthesis; beta-alanine from L-aspartate: step 1/1. Catalyzes the pyruvoyl-dependent decarboxylation of aspartate to produce beta-alanine. The chain is Aspartate 1-decarboxylase from Bdellovibrio bacteriovorus (strain ATCC 15356 / DSM 50701 / NCIMB 9529 / HD100).